The primary structure comprises 323 residues: Elongation factor P--(R)-beta-lysine ligase (323 aa).

Residue 74–76 (SPE) coordinates substrate. Residues 98-100 (RNE) and N107 each bind ATP. Residue Y116 participates in substrate binding. Residue 242–243 (EL) coordinates ATP. E249 contacts substrate. G298 is a binding site for ATP.

It belongs to the class-II aminoacyl-tRNA synthetase family. EpmA subfamily. As to quaternary structure, homodimer.

The enzyme catalyses D-beta-lysine + L-lysyl-[protein] + ATP = N(6)-((3R)-3,6-diaminohexanoyl)-L-lysyl-[protein] + AMP + diphosphate + H(+). In terms of biological role, with EpmB is involved in the beta-lysylation step of the post-translational modification of translation elongation factor P (EF-P). Catalyzes the ATP-dependent activation of (R)-beta-lysine produced by EpmB, forming a lysyl-adenylate, from which the beta-lysyl moiety is then transferred to the epsilon-amino group of a conserved specific lysine residue in EF-P. This Vibrio parahaemolyticus serotype O3:K6 (strain RIMD 2210633) protein is Elongation factor P--(R)-beta-lysine ligase.